The following is a 196-amino-acid chain: Holliday junction branch migration complex subunit RuvA (196 aa).

Positions 1–62 (MYEYINGLIT…ENEMTLYGFI (62 aa)) are domain I. A domain II region spans residues 63-141 (DENEKYLFNK…DLALSAGMTV (79 aa)). Positions 142–146 (ETVPT) are flexible linker. Residues 147–196 (TDNQALADALAALESLGYSAKDVAKLQTVLANQKDTTDGYIRSALKFLVK) are domain III.

The protein belongs to the RuvA family. Homotetramer. Forms an RuvA(8)-RuvB(12)-Holliday junction (HJ) complex. HJ DNA is sandwiched between 2 RuvA tetramers; dsDNA enters through RuvA and exits via RuvB. An RuvB hexamer assembles on each DNA strand where it exits the tetramer. Each RuvB hexamer is contacted by two RuvA subunits (via domain III) on 2 adjacent RuvB subunits; this complex drives branch migration. In the full resolvosome a probable DNA-RuvA(4)-RuvB(12)-RuvC(2) complex forms which resolves the HJ.

It localises to the cytoplasm. Its function is as follows. The RuvA-RuvB-RuvC complex processes Holliday junction (HJ) DNA during genetic recombination and DNA repair, while the RuvA-RuvB complex plays an important role in the rescue of blocked DNA replication forks via replication fork reversal (RFR). RuvA specifically binds to HJ cruciform DNA, conferring on it an open structure. The RuvB hexamer acts as an ATP-dependent pump, pulling dsDNA into and through the RuvAB complex. HJ branch migration allows RuvC to scan DNA until it finds its consensus sequence, where it cleaves and resolves the cruciform DNA. The sequence is that of Holliday junction branch migration complex subunit RuvA from Leuconostoc citreum (strain KM20).